The primary structure comprises 520 residues: U3 small nucleolar RNA-associated protein 15 homolog (520 aa).

WD repeat units follow at residues 36–75 (KEFG…PIKT), 78–117 (RFKD…PLRQ), 120–159 (GHTK…EIVS), 162–202 (EHSD…SVMT), 204–242 (EHGH…QLLV), 246–285 (NHHK…VVHS), and 287–326 (NYAT…SKEK).

Part of the small subunit (SSU) processome, composed of more than 70 proteins and the RNA chaperone small nucleolar RNA (snoRNA) U3. May be a component of the proposed t-UTP subcomplex of the ribosomal small subunit (SSU) processome.

It localises to the nucleus. The protein localises to the nucleolus. In terms of biological role, ribosome biogenesis factor. Involved in nucleolar processing of pre-18S ribosomal RNA. Required for optimal pre-ribosomal RNA transcription by RNA polymerase I. Part of the small subunit (SSU) processome, first precursor of the small eukaryotic ribosomal subunit. During the assembly of the SSU processome in the nucleolus, many ribosome biogenesis factors, an RNA chaperone and ribosomal proteins associate with the nascent pre-rRNA and work in concert to generate RNA folding, modifications, rearrangements and cleavage as well as targeted degradation of pre-ribosomal RNA by the RNA exosome. This Gallus gallus (Chicken) protein is U3 small nucleolar RNA-associated protein 15 homolog (UTP15).